Reading from the N-terminus, the 424-residue chain is Serine/threonine-protein kinase H1 (424 aa).

A lipid anchor (N-myristoyl glycine) is attached at Gly2. Cys3 is lipidated: S-palmitoyl cysteine. The interval 49-81 is disordered; the sequence is KGGFPAASQGANPSPGTPRTSHTEPPSEPPRRA. A compositionally biased stretch (polar residues) spans 57-72; it reads QGANPSPGTPRTSHTE. Residues 98–355 enclose the Protein kinase domain; that stretch reads YDIKALIGRG…ALQALRHPWV (258 aa). ATP is bound by residues 104 to 112 and Lys127; that span reads IGRGSFSRV. The Proton acceptor role is filled by Asp218. Residues 378–407 form a disordered region; that stretch reads RASSRCQSTKSAQSTRSSRSTRSNKSRRVR. 2 positions are modified to phosphoserine; by autocatalysis: Ser380 and Ser381. A compositionally biased stretch (low complexity) spans 385–398; sequence STKSAQSTRSSRST.

The protein belongs to the protein kinase superfamily. CAMK Ser/Thr protein kinase family. As to quaternary structure, homodimer. Post-translationally, autophosphorylated on serine residues. Myristoylated. Required for membrane association. Prerequisite for palmitoylation to occur. In terms of processing, palmitoylated.

Its subcellular location is the golgi apparatus. The protein localises to the cytoplasm. The protein resides in the cytoskeleton. It localises to the microtubule organizing center. It is found in the centrosome. Its subcellular location is the nucleus speckle. The protein localises to the endoplasmic reticulum membrane. The protein resides in the cell membrane. The catalysed reaction is L-seryl-[protein] + ATP = O-phospho-L-seryl-[protein] + ADP + H(+). The enzyme catalyses L-threonyl-[protein] + ATP = O-phospho-L-threonyl-[protein] + ADP + H(+). With respect to regulation, activity depends on Ca(2+) concentration. May be a SFC-associated serine kinase (splicing factor compartment-associated serine kinase) with a role in intranuclear SR protein (non-snRNP splicing factors containing a serine/arginine-rich domain) trafficking and pre-mRNA processing. In Bos taurus (Bovine), this protein is Serine/threonine-protein kinase H1 (PSKH1).